A 113-amino-acid polypeptide reads, in one-letter code: MAGYRKLGRPTDQRKAMLRNLVTSFLKHGKIETTETRAKETRSLAEKMITLAKRGDLHARRQVLAFVTEEEVVKNLFDNIAPKYAERNGGYTRMYKVGPRRGDGAEVVILELV.

It belongs to the bacterial ribosomal protein bL17 family. Part of the 50S ribosomal subunit. Contacts protein L32.

The sequence is that of Large ribosomal subunit protein bL17 from Clostridium perfringens (strain ATCC 13124 / DSM 756 / JCM 1290 / NCIMB 6125 / NCTC 8237 / Type A).